The primary structure comprises 880 residues: Translation initiation factor IF-2 (880 aa).

2 stretches are compositionally biased toward basic and acidic residues: residues 180-194 (QEAA…EAAK) and 202-228 (LAEE…DHHI). The disordered stretch occupies residues 180–289 (QEAATKRKQD…APESMAHGFN (110 aa)). Basic residues predominate over residues 249–262 (GRRARNKSNAKKRG). In terms of domain architecture, tr-type G spans 380 to 549 (SRAPVVTIMG…LLQAEVLELK (170 aa)). The interval 389 to 396 (GHVDHGKT) is G1. 389–396 (GHVDHGKT) lines the GTP pocket. Positions 414–418 (GITQH) are G2. The segment at 435–438 (DTPG) is G3. GTP contacts are provided by residues 435 to 439 (DTPGH) and 489 to 492 (NKMD). Residues 489–492 (NKMD) are G4. Residues 525 to 527 (SAK) are G5.

This sequence belongs to the TRAFAC class translation factor GTPase superfamily. Classic translation factor GTPase family. IF-2 subfamily.

Its subcellular location is the cytoplasm. Functionally, one of the essential components for the initiation of protein synthesis. Protects formylmethionyl-tRNA from spontaneous hydrolysis and promotes its binding to the 30S ribosomal subunits. Also involved in the hydrolysis of GTP during the formation of the 70S ribosomal complex. The protein is Translation initiation factor IF-2 of Shewanella baltica (strain OS223).